Here is a 611-residue protein sequence, read N- to C-terminus: Chaperone protein HtpG (611 aa).

Residues 1 to 326 (MSETLERHAF…TEDLPLNVSR (326 aa)) form an a; substrate-binding region. The b stretch occupies residues 327 to 536 (EMLQATPVLA…SGGPDLQMQR (210 aa)). The tract at residues 537–611 (LLRRAGRGFG…RVAAALAAQA (75 aa)) is c.

It belongs to the heat shock protein 90 family. As to quaternary structure, homodimer.

It is found in the cytoplasm. Its function is as follows. Molecular chaperone. Has ATPase activity. In Methylobacterium sp. (strain 4-46), this protein is Chaperone protein HtpG.